Here is a 740-residue protein sequence, read N- to C-terminus: Homeobox protein 4 (740 aa).

Positions 1 to 13 (MNTVEENNTKITD) are enriched in polar residues. Disordered regions lie at residues 1-41 (MNTV…ENLS) and 179-491 (NNNN…NNEI). 4 stretches are compositionally biased toward low complexity: residues 14 to 34 (NNNN…NNKN), 179 to 241 (NNNN…PQQN), 251 to 288 (NNNN…NNNN), and 303 to 316 (STTD…SVPS). A coiled-coil region spans residues 254 to 287 (NINNNNINKNNNNYNNNNNNKNNNNNNNNNNNNN). Residues 317-328 (NKKKSSKTKQKS) are compositionally biased toward basic residues. Over residues 339-363 (HKSNYHQQPNQNSQHLQSKPNSPIL) the composition is skewed to polar residues. Composition is skewed to low complexity over residues 365–390 (SSPL…SPPQ) and 397–491 (NNNF…NNEI). Residues 472–500 (NTNTNNNNNKNNNNNNNNEIENNNNEELI) are a coiled coil. The homeobox DNA-binding region spans 605-667 (RPKKGAKLSK…NTRRRKVPTL (63 aa)). Low complexity predominate over residues 686–722 (NNNNNNGGNSNFKNNNNNTITTTSTSNNNNNNNNNNH). Positions 686-740 (NNNNNNGGNSNFKNNNNNTITTTSTSNNNNNNNNNNHNEMECDDGENEESSEYDD) are disordered. The span at 726–740 (ECDDGENEESSEYDD) shows a compositional bias: acidic residues.

It is found in the nucleus. In terms of biological role, putative transcription factor. This Dictyostelium discoideum (Social amoeba) protein is Homeobox protein 4 (hbx4).